The sequence spans 475 residues: Ribulose bisphosphate carboxylase large chain (475 aa).

Positions 1-2 (MS) are excised as a propeptide. N-acetylproline is present on P3. K14 carries the N6,N6,N6-trimethyllysine modification. Residues N123 and T173 each coordinate substrate. K175 functions as the Proton acceptor in the catalytic mechanism. K177 is a binding site for substrate. Residues K201, D203, and E204 each contribute to the Mg(2+) site. K201 carries the post-translational modification N6-carboxylysine. The active-site Proton acceptor is the H294. Positions 295, 327, and 379 each coordinate substrate.

Belongs to the RuBisCO large chain family. Type I subfamily. As to quaternary structure, heterohexadecamer of 8 large chains and 8 small chains; disulfide-linked. The disulfide link is formed within the large subunit homodimers. The cofactor is Mg(2+). The disulfide bond which can form in the large chain dimeric partners within the hexadecamer appears to be associated with oxidative stress and protein turnover.

The protein localises to the plastid. It is found in the chloroplast. It carries out the reaction 2 (2R)-3-phosphoglycerate + 2 H(+) = D-ribulose 1,5-bisphosphate + CO2 + H2O. The enzyme catalyses D-ribulose 1,5-bisphosphate + O2 = 2-phosphoglycolate + (2R)-3-phosphoglycerate + 2 H(+). RuBisCO catalyzes two reactions: the carboxylation of D-ribulose 1,5-bisphosphate, the primary event in carbon dioxide fixation, as well as the oxidative fragmentation of the pentose substrate in the photorespiration process. Both reactions occur simultaneously and in competition at the same active site. This is Ribulose bisphosphate carboxylase large chain from Pinus radiata (Monterey pine).